A 158-amino-acid chain; its full sequence is MPPRRKKKAAAAAAAAAAAAAAAGKAAAGKDGKAGIMTPKKPKKGKKKIPLMKYRVYIRRVLTQVRPELGISSKSMLIMNNFVVHNFQNIAKEASILAQYSKKKTITVKELKAAVKLVLPHQLLEYADRDGDRAVHNFESETSKKNSQGRKRGRGQQT.

An N6-acetyllysine mark is found at Lys-7 and Lys-25. Disordered regions lie at residues 26–45 (AAAG…PKKG) and 135–158 (VHNF…GQQT). Over residues 135–144 (VHNFESETSK) the composition is skewed to basic and acidic residues. Residues 147–158 (SQGRKRGRGQQT) are compositionally biased toward basic residues.

It belongs to the histone H2B family. As to quaternary structure, the nucleosome is a histone octamer containing two molecules each of H2A, H2B, H3 and H4 assembled in one H3-H4 heterotetramer and two H2A-H2B heterodimers. The octamer wraps approximately 147 bp of DNA. Can be acetylated to form H2BK6ac and H2BK33ac. Expressed in the generative cell within the bicellular pollen. Not detected in other reproductive or vegetative tissues.

It localises to the nucleus. The protein resides in the chromosome. Core component of nucleosome. Nucleosomes wrap and compact DNA into chromatin, limiting DNA accessibility to the cellular machineries which require DNA as a template. Histones thereby play a central role in transcription regulation, DNA repair, DNA replication and chromosomal stability. DNA accessibility is regulated via a complex set of post-translational modifications of histones, also called histone code, and nucleosome remodeling. The polypeptide is Histone H2B.1 (Lilium longiflorum (Trumpet lily)).